The chain runs to 97 residues: Large ribosomal subunit protein eL21 (97 aa).

The tract at residues 1–26 (MQKSEGFRSKTRYKLQKHPRQKGMAP) is disordered. The span at 9–21 (SKTRYKLQKHPRQ) shows a compositional bias: basic residues.

The protein belongs to the eukaryotic ribosomal protein eL21 family.

This Methanococcus maripaludis (strain C6 / ATCC BAA-1332) protein is Large ribosomal subunit protein eL21.